We begin with the raw amino-acid sequence, 674 residues long: Phosphopantothenoylcysteine decarboxylase subunit VHS3 (674 aa).

Disordered regions lie at residues 1 to 164, 190 to 230, 348 to 368, 384 to 426, and 575 to 674; these read MTNK…SILS, LNSD…RPSV, QHNS…NITG, TSSN…SNVV, and VSAG…LQRS. Residues 15–81 show a composition bias toward polar residues; the sequence is ASNTLSGAEQ…TSGAVVSNTP (67 aa). Thr90 bears the Phosphothreonine mark. Positions 106–116 are enriched in polar residues; that stretch reads EQTPPNQVARQ. Positions 137 to 150 are enriched in basic and acidic residues; that stretch reads NLKDINTKVPKDGE. The span at 152 to 164 shows a compositional bias: polar residues; it reads SASSFSTPTSILS. A compositionally biased stretch (basic and acidic residues) spans 198–212; that stretch reads SPRKEHPHFYVEDPL. Residues 214 to 230 are compositionally biased toward low complexity; that stretch reads TPSVRSRSNSTSPRPSV. The segment covering 351 to 368 has biased composition (polar residues); that stretch reads SIDTSFNSTNSNAGNITG. Over residues 384–395 the composition is skewed to low complexity; that stretch reads TSSNSAASQTNN. Polar residues predominate over residues 403 to 426; it reads MASTTGFPSTLGGSRTYSNSSNVV. The span at 580 to 591 shows a compositional bias: acidic residues; the sequence is EEEEDEDNDEED. Basic and acidic residues predominate over residues 592-602; sequence DNKKNDTGGKD. Residues 603–660 are compositionally biased toward acidic residues; that stretch reads EDNDDDDDDDDDDDDDDDDDDDDDDDDDDDDDDDDDDDDDDDDDDDDDEDDEDEDEDD. The span at 661–674 shows a compositional bias: basic and acidic residues; that stretch reads EGKKKEDKGGLQRS.

It belongs to the HFCD (homooligomeric flavin containing Cys decarboxylase) superfamily. As to quaternary structure, interacts with the C-terminal domain of PPZ1. Component of the phosphopantothenoylcysteine decarboxylase (PPCDC) complex, a heterotrimer composed of CAB3, SIS2 and VHS3.

Functionally, component of the phosphopantothenoylcysteine decarboxylase (PPCDC) involved in the coenzyme A synthesis. Acts as an inhibitory subunit of protein phosphatase PPZ1, which is involved in many cellular processes such as G1-S transition or salt tolerance. This chain is Phosphopantothenoylcysteine decarboxylase subunit VHS3 (VHS3), found in Saccharomyces cerevisiae (strain ATCC 204508 / S288c) (Baker's yeast).